We begin with the raw amino-acid sequence, 126 residues long: Protein ApaG (126 aa).

Residues 2–126 (SALDTSIRVE…FRLATPGLLH (125 aa)) form the ApaG domain.

The polypeptide is Protein ApaG (Shewanella baltica (strain OS223)).